The following is a 306-amino-acid chain: Acetylglutamate kinase (306 aa).

Substrate contacts are provided by residues 68–69 (GG), Arg-90, and Asn-195.

The protein belongs to the acetylglutamate kinase family. ArgB subfamily.

It is found in the cytoplasm. The enzyme catalyses N-acetyl-L-glutamate + ATP = N-acetyl-L-glutamyl 5-phosphate + ADP. Its pathway is amino-acid biosynthesis; L-arginine biosynthesis; N(2)-acetyl-L-ornithine from L-glutamate: step 2/4. Catalyzes the ATP-dependent phosphorylation of N-acetyl-L-glutamate. The chain is Acetylglutamate kinase from Chromohalobacter salexigens (strain ATCC BAA-138 / DSM 3043 / CIP 106854 / NCIMB 13768 / 1H11).